Consider the following 415-residue polypeptide: MSNLENFDKEIFDLTNKELQRQCDYLEMIASENFTYPEVMEVMGSILTNKYAEGYPGKRYYGGCEFVDEIEQTAIDRCKKLFGCNFANVQPNSGSQANQGVYGAFIKPGDKILGMDLSNGGHLTHGAKVNASGKFYSSFFYGVEMDGRIDYNRVADIAKIVKPKLIVCGASAYPREIDFAKFREIADSVGAFLFADVAHIAGLVVAGEHTNPFPYCHVVSSTTHKTLRGPRGGIIMTNEEEFAKKINSSIFPGMQGGPLVHVIAGKAVGFKHNLSPEWKTYAKQVKANCKILGDTLMKRGFDLVSGGTDNHLILVSFLKKDYSGKDASNALENAGITVNKNTVPGETRSPFVTSGIRVGSAALTSRGMKEKEFEWIANKIADVLNDINNTSLQSKIKAEVKELASKFIIYDKAMF.

(6S)-5,6,7,8-tetrahydrofolate contacts are provided by residues Leu117 and 121-123 (GHL). Position 225 is an N6-(pyridoxal phosphate)lysine (Lys225). (6S)-5,6,7,8-tetrahydrofolate is bound by residues Glu241 and 349-351 (SPF).

Belongs to the SHMT family. In terms of assembly, homodimer. It depends on pyridoxal 5'-phosphate as a cofactor.

It is found in the cytoplasm. It carries out the reaction (6R)-5,10-methylene-5,6,7,8-tetrahydrofolate + glycine + H2O = (6S)-5,6,7,8-tetrahydrofolate + L-serine. The protein operates within one-carbon metabolism; tetrahydrofolate interconversion. It functions in the pathway amino-acid biosynthesis; glycine biosynthesis; glycine from L-serine: step 1/1. Catalyzes the reversible interconversion of serine and glycine with tetrahydrofolate (THF) serving as the one-carbon carrier. This reaction serves as the major source of one-carbon groups required for the biosynthesis of purines, thymidylate, methionine, and other important biomolecules. Also exhibits THF-independent aldolase activity toward beta-hydroxyamino acids, producing glycine and aldehydes, via a retro-aldol mechanism. This Campylobacter hominis (strain ATCC BAA-381 / DSM 21671 / CCUG 45161 / LMG 19568 / NCTC 13146 / CH001A) protein is Serine hydroxymethyltransferase.